We begin with the raw amino-acid sequence, 87 residues long: Keratin-associated protein 7-1 (87 aa).

An 11 X 2 AA repeats of G-[YCGS] region spans residues 43-84 (GCGCNGYSSLGYSFGGSNINNLGGCYGGSFYRPWGSGSGFGY).

The protein belongs to the KRTAP type 7 family. In terms of assembly, interacts with hair keratins. Expressed in the upper portion of the hair cortex.

Its function is as follows. In the hair cortex, hair keratin intermediate filaments are embedded in an interfilamentous matrix, consisting of hair keratin-associated proteins (KRTAP), which are essential for the formation of a rigid and resistant hair shaft through their extensive disulfide bond cross-linking with abundant cysteine residues of hair keratins. The matrix proteins include the high-sulfur and high-glycine-tyrosine keratins. The protein is Keratin-associated protein 7-1 (KRTAP7-1) of Homo sapiens (Human).